Here is a 208-residue protein sequence, read N- to C-terminus: Large ribosomal subunit protein uL4 (208 aa).

The disordered stretch occupies residues 44–79; that stretch reads QRQGTHKSKERSEISGSTRKLGRQKGGGGARRGDIN.

The protein belongs to the universal ribosomal protein uL4 family. As to quaternary structure, part of the 50S ribosomal subunit.

Its function is as follows. One of the primary rRNA binding proteins, this protein initially binds near the 5'-end of the 23S rRNA. It is important during the early stages of 50S assembly. It makes multiple contacts with different domains of the 23S rRNA in the assembled 50S subunit and ribosome. Forms part of the polypeptide exit tunnel. In Phocaeicola vulgatus (strain ATCC 8482 / DSM 1447 / JCM 5826 / CCUG 4940 / NBRC 14291 / NCTC 11154) (Bacteroides vulgatus), this protein is Large ribosomal subunit protein uL4.